We begin with the raw amino-acid sequence, 338 residues long: Tetraacyldisaccharide 4'-kinase (338 aa).

Residue histidine 51–threonine 58 coordinates ATP.

This sequence belongs to the LpxK family.

The enzyme catalyses a lipid A disaccharide + ATP = a lipid IVA + ADP + H(+). It functions in the pathway glycolipid biosynthesis; lipid IV(A) biosynthesis; lipid IV(A) from (3R)-3-hydroxytetradecanoyl-[acyl-carrier-protein] and UDP-N-acetyl-alpha-D-glucosamine: step 6/6. Functionally, transfers the gamma-phosphate of ATP to the 4'-position of a tetraacyldisaccharide 1-phosphate intermediate (termed DS-1-P) to form tetraacyldisaccharide 1,4'-bis-phosphate (lipid IVA). The chain is Tetraacyldisaccharide 4'-kinase from Rhodopseudomonas palustris (strain BisB5).